A 39-amino-acid chain; its full sequence is Photosystem II reaction center protein J (39 aa).

The helical transmembrane segment at 9–29 (LWIIATFGGIAALTVVGLFIY) threads the bilayer.

This sequence belongs to the PsbJ family. PSII is composed of 1 copy each of membrane proteins PsbA, PsbB, PsbC, PsbD, PsbE, PsbF, PsbH, PsbI, PsbJ, PsbK, PsbL, PsbM, PsbT, PsbX, PsbY, PsbZ, Psb30/Ycf12, at least 3 peripheral proteins of the oxygen-evolving complex and a large number of cofactors. It forms dimeric complexes.

Its subcellular location is the plastid. It localises to the chloroplast thylakoid membrane. One of the components of the core complex of photosystem II (PSII). PSII is a light-driven water:plastoquinone oxidoreductase that uses light energy to abstract electrons from H(2)O, generating O(2) and a proton gradient subsequently used for ATP formation. It consists of a core antenna complex that captures photons, and an electron transfer chain that converts photonic excitation into a charge separation. The sequence is that of Photosystem II reaction center protein J from Guillardia theta (Cryptophyte).